The chain runs to 279 residues: Membrane protein insertase YidC (279 aa).

The first 22 residues, 1–22 (MKHLKRNMALLSVAALSFILTA), serve as a signal peptide directing secretion. Residue cysteine 23 is the site of N-palmitoyl cysteine attachment. The S-diacylglycerol cysteine moiety is linked to residue cysteine 23. 5 helical membrane-spanning segments follow: residues 35 to 55 (IWDG…SKLF), 59 to 79 (YGWG…PLMI), 129 to 149 (MAGC…YAAV), 170 to 190 (PYFI…WLSM), and 210 to 230 (PLVI…YWVV). Positions 253–268 (EEKIQTEKAKRKAIEK) are enriched in basic and acidic residues. The interval 253–279 (EEKIQTEKAKRKAIEKAKRRAMKSKRK) is disordered. Over residues 269-279 (AKRRAMKSKRK) the composition is skewed to basic residues.

It belongs to the OXA1/ALB3/YidC family. Type 2 subfamily.

The protein localises to the cell membrane. In terms of biological role, required for the insertion and/or proper folding and/or complex formation of integral membrane proteins into the membrane. Involved in integration of membrane proteins that insert both dependently and independently of the Sec translocase complex, as well as at least some lipoproteins. This is Membrane protein insertase YidC from Pediococcus pentosaceus (strain ATCC 25745 / CCUG 21536 / LMG 10740 / 183-1w).